Reading from the N-terminus, the 112-residue chain is Large ribosomal subunit protein uL22 (112 aa).

This sequence belongs to the universal ribosomal protein uL22 family. In terms of assembly, part of the 50S ribosomal subunit.

In terms of biological role, this protein binds specifically to 23S rRNA; its binding is stimulated by other ribosomal proteins, e.g. L4, L17, and L20. It is important during the early stages of 50S assembly. It makes multiple contacts with different domains of the 23S rRNA in the assembled 50S subunit and ribosome. The globular domain of the protein is located near the polypeptide exit tunnel on the outside of the subunit, while an extended beta-hairpin is found that lines the wall of the exit tunnel in the center of the 70S ribosome. The protein is Large ribosomal subunit protein uL22 of Lawsonia intracellularis (strain PHE/MN1-00).